The primary structure comprises 202 residues: Large ribosomal subunit protein uL4 (202 aa).

Residues 47 to 67 (KTKAEVSGGGVKPWKQKGTGR) form a disordered region.

Belongs to the universal ribosomal protein uL4 family. In terms of assembly, part of the 50S ribosomal subunit.

Functionally, one of the primary rRNA binding proteins, this protein initially binds near the 5'-end of the 23S rRNA. It is important during the early stages of 50S assembly. It makes multiple contacts with different domains of the 23S rRNA in the assembled 50S subunit and ribosome. Forms part of the polypeptide exit tunnel. The sequence is that of Large ribosomal subunit protein uL4 from Dichelobacter nodosus (strain VCS1703A).